The following is a 257-amino-acid chain: Imidazole glycerol phosphate synthase subunit HisF (257 aa).

Catalysis depends on residues aspartate 11 and aspartate 130.

The protein belongs to the HisA/HisF family. Heterodimer of HisH and HisF.

It localises to the cytoplasm. It catalyses the reaction 5-[(5-phospho-1-deoxy-D-ribulos-1-ylimino)methylamino]-1-(5-phospho-beta-D-ribosyl)imidazole-4-carboxamide + L-glutamine = D-erythro-1-(imidazol-4-yl)glycerol 3-phosphate + 5-amino-1-(5-phospho-beta-D-ribosyl)imidazole-4-carboxamide + L-glutamate + H(+). The protein operates within amino-acid biosynthesis; L-histidine biosynthesis; L-histidine from 5-phospho-alpha-D-ribose 1-diphosphate: step 5/9. In terms of biological role, IGPS catalyzes the conversion of PRFAR and glutamine to IGP, AICAR and glutamate. The HisF subunit catalyzes the cyclization activity that produces IGP and AICAR from PRFAR using the ammonia provided by the HisH subunit. The sequence is that of Imidazole glycerol phosphate synthase subunit HisF from Mannheimia succiniciproducens (strain KCTC 0769BP / MBEL55E).